The following is a 717-amino-acid chain: Delta-1-pyrroline-5-carboxylate synthase (717 aa).

The segment at 1–296 is glutamate 5-kinase; it reads METVDSTRAF…WASIGETDAR (296 aa). Residues S60, D157, and N176 each coordinate substrate. Residues 196–197 and 236–242 contribute to the ATP site; these read SD and RGGMTAK. Positions 297-717 are gamma-glutamyl phosphate reductase; that stretch reads EMAVAARACS…YSHKDLTQQG (421 aa).

This sequence in the N-terminal section; belongs to the glutamate 5-kinase family. It in the C-terminal section; belongs to the gamma-glutamyl phosphate reductase family. In terms of tissue distribution, expressed at high levels in leaves and is inducible in roots subjected to salt stress.

The enzyme catalyses L-glutamate + ATP = L-glutamyl 5-phosphate + ADP. It catalyses the reaction L-glutamate 5-semialdehyde + phosphate + NADP(+) = L-glutamyl 5-phosphate + NADPH + H(+). The protein operates within amino-acid biosynthesis; L-proline biosynthesis; L-glutamate 5-semialdehyde from L-glutamate: step 1/2. Its pathway is amino-acid biosynthesis; L-proline biosynthesis; L-glutamate 5-semialdehyde from L-glutamate: step 2/2. Feedback regulated by proline. Its function is as follows. P5CS plays a key role in proline biosynthesis, leading to osmoregulation in plants. This is Delta-1-pyrroline-5-carboxylate synthase (PRO2) from Solanum lycopersicum (Tomato).